The chain runs to 152 residues: Xanthine-guanine phosphoribosyltransferase (152 aa).

Residues 37–38, R69, and 88–96 contribute to the 5-phospho-alpha-D-ribose 1-diphosphate site; these read RG and DDLVDTGGT. Residue R69 participates in GMP binding. D89 is a Mg(2+) binding site. 2 residues coordinate guanine: D92 and I135. 2 residues coordinate xanthine: D92 and I135. GMP is bound by residues 92–96 and 134–135; these read DTGGT and WI.

The protein belongs to the purine/pyrimidine phosphoribosyltransferase family. XGPT subfamily. As to quaternary structure, homotetramer. Requires Mg(2+) as cofactor.

It is found in the cell inner membrane. The catalysed reaction is GMP + diphosphate = guanine + 5-phospho-alpha-D-ribose 1-diphosphate. It catalyses the reaction XMP + diphosphate = xanthine + 5-phospho-alpha-D-ribose 1-diphosphate. It carries out the reaction IMP + diphosphate = hypoxanthine + 5-phospho-alpha-D-ribose 1-diphosphate. Its pathway is purine metabolism; GMP biosynthesis via salvage pathway; GMP from guanine: step 1/1. The protein operates within purine metabolism; XMP biosynthesis via salvage pathway; XMP from xanthine: step 1/1. In terms of biological role, purine salvage pathway enzyme that catalyzes the transfer of the ribosyl-5-phosphate group from 5-phospho-alpha-D-ribose 1-diphosphate (PRPP) to the N9 position of the 6-oxopurines guanine and xanthine to form the corresponding ribonucleotides GMP (guanosine 5'-monophosphate) and XMP (xanthosine 5'-monophosphate), with the release of PPi. To a lesser extent, also acts on hypoxanthine. The polypeptide is Xanthine-guanine phosphoribosyltransferase (Pectobacterium atrosepticum (strain SCRI 1043 / ATCC BAA-672) (Erwinia carotovora subsp. atroseptica)).